We begin with the raw amino-acid sequence, 106 residues long: Met repressor (106 aa).

It belongs to the MetJ family. Homodimer.

It is found in the cytoplasm. Functionally, this regulatory protein, when combined with SAM (S-adenosylmethionine) represses the expression of the methionine regulon and of enzymes involved in SAM synthesis. This chain is Met repressor, found in Vibrio campbellii (strain ATCC BAA-1116).